The chain runs to 453 residues: Ezy-1 protein (453 aa).

The first 28 residues, 1–28 (MQLSNSLRSARSAAASSGCALASRPVVA), serve as a signal peptide directing secretion. Disordered stretches follow at residues 167–187 (SDGG…DADG), 272–307 (TGKA…SSGG), and 412–453 (SAGD…SPNM). Positions 279-300 (AEGDDGEGEEEGEAQDVGEDAV) are enriched in acidic residues. The span at 415–425 (DGHEPEPKRPE) shows a compositional bias: basic and acidic residues.

This Chlamydomonas reinhardtii (Chlamydomonas smithii) protein is Ezy-1 protein (Ezy-1).